Here is a 4518-residue protein sequence, read N- to C-terminus: Dynein axonemal heavy chain 11 (4518 aa).

The tract at residues 1–1857 is stem; sequence MAASVAAQEA…LVHICDAQFQ (1857 aa). AAA stretches follow at residues 1858 to 2079, 2139 to 2368, 2474 to 2721, and 2819 to 3068; these read YFYE…VLVV, QMVR…TSFK, TMDP…VFQG, and NYND…EGRH. Residues 1896 to 1903, 2177 to 2184, 2512 to 2519, and 2857 to 2864 each bind ATP; these read GPAGTGKT, GNAGTGKS, GNAGVGKT, and GVGGSGKQ. The tract at residues 3074-3405 is stalk; sequence KSFLEQISLF…GQSIKSFEAQ (332 aa). Residues 3322–3391 adopt a coiled-coil conformation; sequence LAQANLELAT…NRLVKELEVK (70 aa). 2 AAA regions span residues 3461–3688 and 3898–4124; these read LTDD…EIER and LRNF…VLYN.

This sequence belongs to the dynein heavy chain family. As to quaternary structure, consists of at least two heavy chains and a number of intermediate and light chains. Interacts with CFAP45.

The protein localises to the cytoplasm. It is found in the cytoskeleton. The protein resides in the cilium axoneme. Force generating protein of respiratory cilia. Produces force towards the minus ends of microtubules. Dynein has ATPase activity; the force-producing power stroke is thought to occur on release of ADP. This is Dynein axonemal heavy chain 11 (DNAH11) from Sus scrofa (Pig).